A 231-amino-acid chain; its full sequence is Ribonuclease 3 (231 aa).

One can recognise an RNase III domain in the interval 5–134; that stretch reads QEKLKNDYGL…FLGALFIDQG (130 aa). A Mg(2+)-binding site is contributed by Glu47. Asp51 is an active-site residue. The Mg(2+) site is built by Asn120 and Glu123. Glu123 is an active-site residue. In terms of domain architecture, DRBM spans 160 to 229; it reads DYKTELQEVL…AENAIKGQNH (70 aa).

Belongs to the ribonuclease III family. Homodimer. It depends on Mg(2+) as a cofactor.

The protein resides in the cytoplasm. The enzyme catalyses Endonucleolytic cleavage to 5'-phosphomonoester.. Digests double-stranded RNA. Involved in the processing of primary rRNA transcript to yield the immediate precursors to the large and small rRNAs (23S and 16S). Processes some mRNAs, and tRNAs when they are encoded in the rRNA operon. Processes pre-crRNA and tracrRNA of type II CRISPR loci if present in the organism. This is Ribonuclease 3 from Lactococcus lactis subsp. cremoris (strain SK11).